The primary structure comprises 192 residues: Nucleoside triphosphate pyrophosphatase (192 aa).

Asp-73 functions as the Proton acceptor in the catalytic mechanism.

The protein belongs to the Maf family. The cofactor is a divalent metal cation.

It is found in the cytoplasm. It carries out the reaction a ribonucleoside 5'-triphosphate + H2O = a ribonucleoside 5'-phosphate + diphosphate + H(+). It catalyses the reaction a 2'-deoxyribonucleoside 5'-triphosphate + H2O = a 2'-deoxyribonucleoside 5'-phosphate + diphosphate + H(+). Nucleoside triphosphate pyrophosphatase. May have a dual role in cell division arrest and in preventing the incorporation of modified nucleotides into cellular nucleic acids. The chain is Nucleoside triphosphate pyrophosphatase from Ehrlichia ruminantium (strain Welgevonden).